Here is a 213-residue protein sequence, read N- to C-terminus: MSYAYLFKYIIIGDTGVGKSCLLLQFTDKRFQPVHDLTIGVEFGARMINIDGKQIKLQIWDTAGQESFRSITRSYYRGAAGALLVYDITRRETFNHLASWLEDARQHANPNMTIMLIGNKCDLTHRRAVTTEEGEQFAKEHGLIFLETSARTAHNVEEAFINTAKEIYKKIQDGVFDVSNESYGIKVGYGGGNAGPQTVKPGEGGAAKSSSCC.

Gly13 to Cys21 provides a ligand contact to GTP. Positions His35–Phe43 match the Effector region motif. Residues Asp61 to Gln65, Asn119 to Asp122, and Ser149 to Arg151 contribute to the GTP site. The interval Ala194–Cys213 is disordered. Residues Cys212 and Cys213 are each lipidated (S-geranylgeranyl cysteine).

This sequence belongs to the small GTPase superfamily. Rab family.

The protein localises to the cell membrane. Protein transport. Probably involved in vesicular traffic. The polypeptide is GTP-binding protein YPTC4 (YPTC4) (Chlamydomonas reinhardtii (Chlamydomonas smithii)).